Reading from the N-terminus, the 380-residue chain is Queuine tRNA-ribosyltransferase (380 aa).

Asp96 functions as the Proton acceptor in the catalytic mechanism. Substrate is bound by residues 96–100 (DSGGF), Asp150, Gln193, and Gly220. The tract at residues 251 to 257 (GVGAPDS) is RNA binding. Asp270 functions as the Nucleophile in the catalytic mechanism. Positions 275 to 279 (TRIAR) are RNA binding; important for wobble base 34 recognition. Zn(2+) is bound by residues Cys308, Cys310, Cys313, and His339.

Belongs to the queuine tRNA-ribosyltransferase family. In terms of assembly, homodimer. Within each dimer, one monomer is responsible for RNA recognition and catalysis, while the other monomer binds to the replacement base PreQ1. It depends on Zn(2+) as a cofactor.

The catalysed reaction is 7-aminomethyl-7-carbaguanine + guanosine(34) in tRNA = 7-aminomethyl-7-carbaguanosine(34) in tRNA + guanine. It participates in tRNA modification; tRNA-queuosine biosynthesis. Its function is as follows. Catalyzes the base-exchange of a guanine (G) residue with the queuine precursor 7-aminomethyl-7-deazaguanine (PreQ1) at position 34 (anticodon wobble position) in tRNAs with GU(N) anticodons (tRNA-Asp, -Asn, -His and -Tyr). Catalysis occurs through a double-displacement mechanism. The nucleophile active site attacks the C1' of nucleotide 34 to detach the guanine base from the RNA, forming a covalent enzyme-RNA intermediate. The proton acceptor active site deprotonates the incoming PreQ1, allowing a nucleophilic attack on the C1' of the ribose to form the product. After dissociation, two additional enzymatic reactions on the tRNA convert PreQ1 to queuine (Q), resulting in the hypermodified nucleoside queuosine (7-(((4,5-cis-dihydroxy-2-cyclopenten-1-yl)amino)methyl)-7-deazaguanosine). The chain is Queuine tRNA-ribosyltransferase from Streptococcus suis (strain 98HAH33).